Consider the following 422-residue polypeptide: tRNA hydroxylation protein P (422 aa).

Residues 1-58 (MNQVELLSPAGNLKKLKIALNYGADAVYGGVSHFSLRNRAGKEFTLETFKEGIDYAHA) form the signal peptide.

The protein belongs to the peptidase U32 family.

Involved in prephenate-dependent formation of 5-hydroxyuridine (ho5U) modification at position 34 in tRNAs, the first step in 5-carboxymethoxyuridine (cmo5U) biosynthesis. This is tRNA hydroxylation protein P from Helicobacter pylori (strain J99 / ATCC 700824) (Campylobacter pylori J99).